The sequence spans 473 residues: Hyaluronidase-2 (473 aa).

Positions 1–20 (MRAGLGPIITLALVLEVAWA) are cleaved as a signal peptide. Disulfide bonds link C47/C340 and C211/C227. N74 and N103 each carry an N-linked (GlcNAc...) asparagine glycan. E135 functions as the Proton donor in the catalytic mechanism. A glycan (N-linked (GlcNAc...) asparagine) is linked at N357. Residues 361-439 (ATQYCSWTQC…YLGWGGEQCQ (79 aa)) form the EGF-like domain. Disulfide bonds link C365/C376, C370/C427, and C429/C438. An N-linked (GlcNAc...) asparagine glycan is attached at N390. N448 carries the GPI-anchor amidated asparagine; alternate lipid modification. A glycan (N-linked (GlcNAc...) asparagine; alternate) is linked at N448. The propeptide at 449–473 (ASRAWAGSHLTSLLGLVAVALTWTL) is removed in mature form.

It belongs to the glycosyl hydrolase 56 family. In terms of assembly, interacts with MST1R. Widely expressed, with highest expression levels in kidney, lung and liver (at protein level).

It is found in the cell membrane. The catalysed reaction is Random hydrolysis of (1-&gt;4)-linkages between N-acetyl-beta-D-glucosamine and D-glucuronate residues in hyaluronate.. Its function is as follows. Catalyzes hyaluronan degradation into small fragments that are endocytosed and degraded in lysosomes by HYAL1 and exoglycosidases. Essential for the breakdown of extracellular matrix hyaluronan. In Mus musculus (Mouse), this protein is Hyaluronidase-2 (Hyal2).